Reading from the N-terminus, the 113-residue chain is Protein translation factor SUI1 homolog (113 aa).

The protein belongs to the SUI1 family.

Functionally, probably involved in translation. This is Protein translation factor SUI1 homolog from Salix bakko (Japanese willow).